The primary structure comprises 182 residues: MQTEHVILLNAQGVPTGTLEKYAAHTADTLLHLAFSSWLFNAKGQLLVTRRALSKKAWPGVWTNSVCGHPQLGESNEDAVIRRCRYELGVEITPPESIYPDFRYRATDPNGIVENEVCPVFAARTNSALQINDDEVMDYQWCDLADVLHGIDATPWAFSPWMVMQAANSEARKLLSAFAQHN.

Residues H25 and H32 each contribute to the Mn(2+) site. The 135-residue stretch at 30–164 (LLHLAFSSWL…PWAFSPWMVM (135 aa)) folds into the Nudix hydrolase domain. C67 is a catalytic residue. C67 serves as a coordination point for Mg(2+). H69 is a binding site for Mn(2+). E87 is a binding site for Mg(2+). Residues E114 and E116 each contribute to the Mn(2+) site. E116 is a catalytic residue.

This sequence belongs to the IPP isomerase type 1 family. Homodimer. It depends on Mg(2+) as a cofactor. Requires Mn(2+) as cofactor.

It localises to the cytoplasm. It catalyses the reaction isopentenyl diphosphate = dimethylallyl diphosphate. It participates in isoprenoid biosynthesis; dimethylallyl diphosphate biosynthesis; dimethylallyl diphosphate from isopentenyl diphosphate: step 1/1. Functionally, catalyzes the 1,3-allylic rearrangement of the homoallylic substrate isopentenyl (IPP) to its highly electrophilic allylic isomer, dimethylallyl diphosphate (DMAPP). In Shigella boydii serotype 4 (strain Sb227), this protein is Isopentenyl-diphosphate Delta-isomerase.